Reading from the N-terminus, the 817-residue chain is MDRDLEQALDRTENITEIAQQRRPRRRYSPRAGKTLQEKLYDIYVEECGKEPEDPQELRSNVNLLEKLVRRESLPCLLVNLYPGNQGYSVMLQREDGSFAETIRLPYEERALLDYLDAEELPPALGDVLDKASVNIFHSGCVIVEVRDYRQSSNMQPPGYQSRHILLRPTMQTLAPEVKTMTRDGEKWSQEDKFPLESQLILATAEPLCLDPSVAVACTANRLLYNKQKMNTDPMEQCLQRYSWPSVKPQQEQSDCPPPPELRVSTSGQKEERKVGQPCELNITKAGSCVDTWKGRPCDLAVPSEVDVEKLAKGYQSVTAADPQLPVWPAQEVEDPFRHAWEAGCQAWDTKPNIMQSFNDPLLCGKIRPRKKARQKSQKSPWQPFPDDHSACLRPGSETDAGRAVSQAQESVQSKVKGPGKMSHSSSGPASVSQLSSWKTPEQPDPVWVQSSVSGKGEKHPPPRTQLPSSSGKISSGNSFPPQQAGSPLKRPFPAAAPAVAAAAPAPAPAPAAAPALAAAAVAAAAGGAAPSHSQKPSVPLIKASRRRPAAGRPTRFVKIAPAIQVRTGSTGLKATNVEGPVRGAQVLGCSFKPVQAPGSGAPAPAGISGSGLQSSGGPLPDARPGAVQASSPAPLQFFLNTPEGLRPLTLQVPQGWAVLTGPQQQSHQLVSLQQLQQPTAAHPPQPGPQGSTLGLSTQGQAFPAQQLLNVNLTGAGSGLQPQPQAAVLSLLGSAQVPQQGVQLPFVLGQQPQPLLLLQPQPQPQQIQLQTQPLRVLQQPVFLATGAVQIVQPHPGVQAGSQLVGQRKGGKPTPPAP.

Basic and acidic residues predominate over residues Met1 to Asn14. 5 disordered regions span residues Met1–Tyr28, Pro249–Val275, Pro369–Arg553, Pro598–Ala630, and Gln675–Ser697. Residues Ser423–Thr440 show a composition bias toward polar residues. Composition is skewed to low complexity over residues Ser469–Ser479, Pro494–Pro505, Ala513–Pro531, and Pro598–Gly618.

It belongs to the SPT20 family.

The chain is Transcription factor SPT20 homolog-like 2 (SUPT20HL2) from Homo sapiens (Human).